We begin with the raw amino-acid sequence, 100 residues long: Urease subunit gamma (100 aa).

The protein belongs to the urease gamma subunit family. In terms of assembly, heterotrimer of UreA (gamma), UreB (beta) and UreC (alpha) subunits. Three heterotrimers associate to form the active enzyme.

The protein resides in the cytoplasm. It carries out the reaction urea + 2 H2O + H(+) = hydrogencarbonate + 2 NH4(+). It participates in nitrogen metabolism; urea degradation; CO(2) and NH(3) from urea (urease route): step 1/1. The chain is Urease subunit gamma from Micrococcus luteus (strain ATCC 4698 / DSM 20030 / JCM 1464 / CCM 169 / CCUG 5858 / IAM 1056 / NBRC 3333 / NCIMB 9278 / NCTC 2665 / VKM Ac-2230) (Micrococcus lysodeikticus).